Reading from the N-terminus, the 374-residue chain is Pulmonary surfactant-associated protein D (374 aa).

The signal sequence occupies residues 1 to 19; sequence MLPFLSMLVLLVQPLGNLG. An S-nitrosocysteine mark is found at Cys34 and Cys39. A disordered region spans residues 38 to 222; sequence MCSPTENGLP…GIKGESGLPD (185 aa). In terms of domain architecture, Collagen-like spans 45 to 221; it reads GLPGRDGRDG…RGIKGESGLP (177 aa). The segment covering 49–64 has biased composition (basic and acidic residues); the sequence is RDGRDGREGPRGEKGD. Positions 70-79 are enriched in low complexity; sequence PMGLSGLQGP. The N-linked (GlcNAc...) asparagine glycan is linked to Asn89. 2 stretches are compositionally biased toward low complexity: residues 137-149 and 169-200; these read KGEAGPKGEVGAP and APGVQGAPGNAGAAGPAGPAGPQGAPGSRGPP. The segment covering 203–215 has biased composition (basic and acidic residues); the sequence is KGDRGVPGDRGIK. The stretch at 222–253 forms a coiled coil; that stretch reads DSAALRQQMEALKGKLQRLEVAFSHYQKAALF. Residues 259–374 enclose the C-type lectin domain; the sequence is VGDKIFRTAD…GEQRLVICEF (116 aa). 2 disulfides stabilise this stretch: Cys280/Cys372 and Cys350/Cys364.

Belongs to the SFTPD family. Oligomeric complex of 4 set of homotrimers. Post-translationally, S-nitrosylation at Cys-34 and Cys-39 alters the quaternary structure which results in a pro-inflammatory chemoattractive signaling activity with macrophages.

The protein localises to the secreted. The protein resides in the extracellular space. Its subcellular location is the extracellular matrix. It is found in the surface film. Its function is as follows. Contributes to the lung's defense against inhaled microorganisms, organic antigens and toxins. Interacts with compounds such as bacterial lipopolysaccharides, oligosaccharides and fatty acids and modulates leukocyte action in immune response. May participate in the extracellular reorganization or turnover of pulmonary surfactant. Binds strongly maltose residues and to a lesser extent other alpha-glucosyl moieties. This chain is Pulmonary surfactant-associated protein D (Sftpd), found in Mus musculus (Mouse).